Consider the following 205-residue polypeptide: Probable transcription factor Ken (205 aa).

C2H2-type zinc fingers lie at residues 106 to 128 (YRCE…LRVH), 134 to 157 (FACR…CSVH), and 173 to 196 (YSCC…SGHH).

It is found in the nucleus. Its function is as follows. Probable transcription factor, which is required for terminalia development. In Drosophila yakuba (Fruit fly), this protein is Probable transcription factor Ken (ken).